Consider the following 434-residue polypeptide: 3-phosphoshikimate 1-carboxyvinyltransferase (434 aa).

3-phosphoshikimate contacts are provided by Lys-22, Ser-23, and Arg-27. Residue Lys-22 participates in phosphoenolpyruvate binding. 2 residues coordinate phosphoenolpyruvate: Gly-93 and Arg-121. 3-phosphoshikimate contacts are provided by Ser-168, Ser-169, Gln-170, Ser-199, Asp-320, and Lys-347. Residue Gln-170 coordinates phosphoenolpyruvate. Asp-320 (proton acceptor) is an active-site residue. Positions 351, 394, and 419 each coordinate phosphoenolpyruvate.

Belongs to the EPSP synthase family. Monomer.

It localises to the cytoplasm. It carries out the reaction 3-phosphoshikimate + phosphoenolpyruvate = 5-O-(1-carboxyvinyl)-3-phosphoshikimate + phosphate. Its pathway is metabolic intermediate biosynthesis; chorismate biosynthesis; chorismate from D-erythrose 4-phosphate and phosphoenolpyruvate: step 6/7. In terms of biological role, catalyzes the transfer of the enolpyruvyl moiety of phosphoenolpyruvate (PEP) to the 5-hydroxyl of shikimate-3-phosphate (S3P) to produce enolpyruvyl shikimate-3-phosphate and inorganic phosphate. The chain is 3-phosphoshikimate 1-carboxyvinyltransferase from Burkholderia multivorans (strain ATCC 17616 / 249).